Reading from the N-terminus, the 291-residue chain is Glucose and ribitol dehydrogenase (291 aa).

A disordered region spans residues 1 to 35 (MASGGQFPPQKQESQPGKEHLMDPSPQHASPHYKP). 45 to 69 (LVTGGDSGIGRSVCYHFALEGATVA) serves as a coordination point for NAD(+). S183 is a substrate binding site. Y196 serves as the catalytic Proton acceptor.

The protein belongs to the short-chain dehydrogenases/reductases (SDR) family. Expressed in embryogenic cells, somatic embryos and seeds in the later stages of development, but not in non-embryogenic cells and mature leaves.

Functionally, may act as a short alcohol-polyol-sugar dehydrogenase possibly related to carbohydrate metabolism and the acquisition of desiccation tolerance. May also be involved in signal transduction. The protein is Glucose and ribitol dehydrogenase (CAISE5) of Daucus carota (Wild carrot).